The chain runs to 159 residues: 2-C-methyl-D-erythritol 2,4-cyclodiphosphate synthase (159 aa).

2 residues coordinate a divalent metal cation: aspartate 10 and histidine 12. Residues 10–12 (DVH) and 36–37 (HS) each bind 4-CDP-2-C-methyl-D-erythritol 2-phosphate. An a divalent metal cation-binding site is contributed by histidine 44. Residues 58-60 (DIG) and arginine 144 each bind 4-CDP-2-C-methyl-D-erythritol 2-phosphate.

The protein belongs to the IspF family. Homotrimer. The cofactor is a divalent metal cation.

It catalyses the reaction 4-CDP-2-C-methyl-D-erythritol 2-phosphate = 2-C-methyl-D-erythritol 2,4-cyclic diphosphate + CMP. It functions in the pathway isoprenoid biosynthesis; isopentenyl diphosphate biosynthesis via DXP pathway; isopentenyl diphosphate from 1-deoxy-D-xylulose 5-phosphate: step 4/6. Its function is as follows. Involved in the biosynthesis of isopentenyl diphosphate (IPP) and dimethylallyl diphosphate (DMAPP), two major building blocks of isoprenoid compounds. Catalyzes the conversion of 4-diphosphocytidyl-2-C-methyl-D-erythritol 2-phosphate (CDP-ME2P) to 2-C-methyl-D-erythritol 2,4-cyclodiphosphate (ME-CPP) with a corresponding release of cytidine 5-monophosphate (CMP). The chain is 2-C-methyl-D-erythritol 2,4-cyclodiphosphate synthase from Paraburkholderia phymatum (strain DSM 17167 / CIP 108236 / LMG 21445 / STM815) (Burkholderia phymatum).